Here is a 33-residue protein sequence, read N- to C-terminus: Brevinin-2HSa (33 aa).

A disulfide bridge links Cys-27 with Cys-33.

Expressed by the skin glands.

The protein localises to the secreted. Its function is as follows. Has antibacterial activity against the Gram-positive bacterium S.aureus ATCC 25923 (MIC=18 uM) and the Gram-negative bacterium E.coli ATCC 25726 (MIC=36 uM). The chain is Brevinin-2HSa from Odorrana hosii (Hose's rock frog).